Consider the following 93-residue polypeptide: Kunitz-type serine protease inhibitor 3 (93 aa).

The signal sequence occupies residues methionine 1 to threonine 24. One can recognise a BPTI/Kunitz inhibitor domain in the interval cysteine 31–cysteine 81. 3 cysteine pairs are disulfide-bonded: cysteine 31–cysteine 81, cysteine 40–cysteine 64, and cysteine 56–cysteine 77. Positions isoleucine 90–asparagine 93 are excised as a propeptide.

It belongs to the venom Kunitz-type family. As to expression, expressed by the venom gland.

The protein localises to the secreted. Its function is as follows. Serine protease inhibitor that principally inhibits alpha-chymotrypsin (Ki=4.3 nM). Shows weak inhibition on trypsin (Ki=5100 nM), and plasma kallikrein. This chain is Kunitz-type serine protease inhibitor 3, found in Vipera ammodytes ammodytes (Western sand viper).